Here is a 377-residue protein sequence, read N- to C-terminus: Flap endonuclease 1 (377 aa).

The interval 1–105 is N-domain; it reads MGIKGLSQVI…GELAKRASRQ (105 aa). Residue aspartate 34 coordinates Mg(2+). Arginine 47 and arginine 71 together coordinate DNA. Aspartate 87 lines the Mg(2+) pocket. Residues 96-115 are disordered; sequence GELAKRASRQQKAREEREEA. The interval 123–254 is I-domain; sequence MVDKFAKRTV…ARAVELIRQH (132 aa). Mg(2+)-binding residues include glutamate 159, glutamate 161, aspartate 180, and aspartate 182. A DNA-binding site is contributed by glutamate 159. Glycine 232 and aspartate 234 together coordinate DNA. Residue aspartate 234 participates in Mg(2+) binding. An interaction with PCNA region spans residues 337–345; sequence PQGRLDSFF. Residues 350-377 form a disordered region; the sequence is STKKEKEKPKAAAKRKRDTKSSAPKKKR. Positions 360 to 377 are enriched in basic residues; that stretch reads AAAKRKRDTKSSAPKKKR.

It belongs to the XPG/RAD2 endonuclease family. FEN1 subfamily. As to quaternary structure, interacts with PCNA. Three molecules of rad2 bind to one PCNA trimer with each molecule binding to one PCNA monomer. PCNA stimulates the nuclease activity without altering cleavage specificity. Requires Mg(2+) as cofactor. In terms of processing, phosphorylated. Phosphorylation upon DNA damage induces relocalization to the nuclear plasma.

Its subcellular location is the nucleus. It localises to the nucleolus. The protein resides in the nucleoplasm. The protein localises to the mitochondrion. Its function is as follows. Structure-specific nuclease with 5'-flap endonuclease and 5'-3' exonuclease activities involved in DNA replication and repair. During DNA replication, cleaves the 5'-overhanging flap structure that is generated by displacement synthesis when DNA polymerase encounters the 5'-end of a downstream Okazaki fragment. It enters the flap from the 5'-end and then tracks to cleave the flap base, leaving a nick for ligation. Also involved in the long patch base excision repair (LP-BER) pathway, by cleaving within the apurinic/apyrimidinic (AP) site-terminated flap. Acts as a genome stabilization factor that prevents flaps from equilibrating into structures that lead to duplications and deletions. Also possesses 5'-3' exonuclease activity on nicked or gapped double-stranded DNA, and exhibits RNase H activity. Also involved in replication and repair of rDNA and in repairing mitochondrial DNA. The polypeptide is Flap endonuclease 1 (Schizosaccharomyces japonicus (strain yFS275 / FY16936) (Fission yeast)).